A 337-amino-acid polypeptide reads, in one-letter code: Phenylpyruvate C(3)-methyltransferase (337 aa).

The protein belongs to the methyltransferase superfamily.

It catalyses the reaction 3-phenylpyruvate + S-adenosyl-L-methionine = (3S)-2-oxo-3-phenylbutanoate + S-adenosyl-L-homocysteine + H(+). The protein operates within antibiotic biosynthesis. Functionally, S-adenosyl-L-methionine-dependent methyltransferase involved in synthesis of the nonproteinogenic amino acid (2S,3S)-beta-methyl-phenylalanine, a building block of the antibiotic mannopeptimycin. This Streptomyces hygroscopicus protein is Phenylpyruvate C(3)-methyltransferase (mppJ).